Here is a 492-residue protein sequence, read N- to C-terminus: KAT8 regulatory NSL complex subunit 2 (492 aa).

A Glycyl lysine isopeptide (Lys-Gly) (interchain with G-Cter in SUMO2) cross-link involves residue lysine 78. Residues 126–182 are disordered; sequence ELGSQTPESSRSEASRILDEDSWSDGEQEPITVDQTWRGDPDSEADSIDRDQEDPLK. Threonine 131 carries the phosphothreonine modification. Residues 135-144 show a composition bias toward basic and acidic residues; sequence SRSEASRILD. Phosphoserine is present on residues serine 147, serine 149, serine 168, and serine 172. Residues 162-182 are compositionally biased toward basic and acidic residues; the sequence is WRGDPDSEADSIDRDQEDPLK. A required for interaction with other NSL complex members region spans residues 308–364; that stretch reads DVRCSNQSLPMTRHCLTHICQDTNRVLFKCCQGSEEVPCNKPVPVSLSEDPCCPLHF. Residues 453–492 are disordered; it reads QMAGDGCRSQGPRNSEKAPAPLSQSGIATANGKPEPTSVS.

In terms of assembly, component of the NSL complex at least composed of KAT8/MOF, KANSL1, KANSL2, KANSL3, MCRS1, PHF20, OGT1/OGT, WDR5 and HCFC1. As to expression, ubiquitously expressed.

Its subcellular location is the nucleus. It localises to the mitochondrion. Its function is as follows. Non-catalytic component of the NSL histone acetyltransferase complex, a multiprotein complex that mediates histone H4 acetylation at 'Lys-5'- and 'Lys-8' (H4K5ac and H4K8ac) at transcription start sites and promotes transcription initiation. Required for NSL complex stability and for transcription of intraciliary transport genes in both ciliated and non-ciliated cells by regulating histone H4 acetylation at 'Lys-5'- and 'Lys-12' (H4K5ac and H4K12ac). This is necessary for cilium assembly in ciliated cells and for organization of the microtubule cytoskeleton in non-ciliated cells. Required within the NSL complex to maintain nuclear architecture stability by promoting KAT8-mediated acetylation of lamin LMNA. The protein is KAT8 regulatory NSL complex subunit 2 (KANSL2) of Capra hircus (Goat).